Consider the following 1310-residue polypeptide: Angiotensin-converting enzyme (1310 aa).

Residues 1–33 form the signal peptide; the sequence is MGAAPGRRGPRLLRPPPPLLLLLLLLRPPPAAL. The Extracellular portion of the chain corresponds to 34-1260; the sequence is TLDPGLLPGD…GMNLDAQQAR (1227 aa). Peptidase M2 domains lie at 45–628 and 647–1226; these read AADE…LGWP and VTDE…LGWP. 3 N-linked (GlcNAc...) asparagine glycosylation sites follow: asparagine 59, asparagine 79, and asparagine 151. Cysteine 162 and cysteine 170 are joined by a disulfide. Position 236 (tyrosine 236) interacts with chloride. Asparagine 323 is a glycosylation site (N-linked (GlcNAc...) asparagine). A disulfide bond links cysteine 364 and cysteine 382. Histidine 395 serves as a coordination point for Zn(2+). The Proton acceptor 1 role is filled by glutamate 396. Residues histidine 399 and glutamate 422 each coordinate Zn(2+). N-linked (GlcNAc...) asparagine glycosylation is found at asparagine 449 and asparagine 513. The active-site Proton donor 1 is the histidine 524. Arginine 533 contacts chloride. Cysteine 549 and cysteine 561 form a disulfide bridge. N-linked (GlcNAc...) asparagine glycosylation is found at asparagine 681, asparagine 699, and asparagine 718. Residues cysteine 761 and cysteine 767 are joined by a disulfide bond. Chloride-binding residues include arginine 795 and tyrosine 833. N-linked (GlcNAc...) asparagine glycosylation is present at asparagine 946. Cysteine 961 and cysteine 979 are joined by a disulfide. Histidine 992 is a Zn(2+) binding site. Glutamate 993 (proton acceptor 2) is an active-site residue. 2 residues coordinate Zn(2+): histidine 996 and glutamate 1020. The chloride site is built by tryptophan 1094 and arginine 1098. Histidine 1122 functions as the Proton donor 2 in the catalytic mechanism. Arginine 1131 serves as a coordination point for chloride. A disulfide bridge connects residues cysteine 1147 and cysteine 1159. N-linked (GlcNAc...) asparagine glycosylation occurs at asparagine 1195. Residues 1219-1260 form a juxtamembrane stalk region; that stretch reads HGEKLGWPQYTWTPNSARSEGSLPDSGRVNFLGMNLDAQQAR. Residues 1261–1281 traverse the membrane as a helical segment; it reads VGQWVLLFLGVALLLASLGLT. The Cytoplasmic portion of the chain corresponds to 1282-1310; sequence QRLFSIRYQSLRQPHHGPQFGSEVELRHS. The residue at position 1303 (serine 1303) is a Phosphoserine.

It belongs to the peptidase M2 family. In terms of assembly, monomer and homodimer; homodimerizes following binding to an inhibitor. Interacts with calmodulin (CALM1, CALM2 or CALM3); interaction takes place in the cytoplasmic region and regulates phosphorylation and proteolytic cleavage. It depends on Zn(2+) as a cofactor. Requires chloride as cofactor. N-glycosylated. Post-translationally, phosphorylated by CK2 on Ser-1303; which allows membrane retention. Phosphorylated on tyrosine residues on its extracellular part, promoting cleavage by secretase enzymes and formation of the soluble form (Angiotensin-converting enzyme, soluble form). In terms of processing, produced following proteolytic cleavage by secretase enzymes that cleave the transmembrane form in the juxtamembrane stalk region upstream of the transmembrane region. Cleavage can take place at different sites of the juxtamembrane stalk region. In terms of tissue distribution, testis-specific isoform is expressed in spermatocytes, adult testis.

It is found in the cell membrane. The protein localises to the cytoplasm. It localises to the secreted. It catalyses the reaction Release of a C-terminal dipeptide, oligopeptide-|-Xaa-Yaa, when Xaa is not Pro, and Yaa is neither Asp nor Glu. Thus, conversion of angiotensin I to angiotensin II, with increase in vasoconstrictor activity, but no action on angiotensin II.. The enzyme catalyses angiotensin I + H2O = L-histidyl-L-leucine + angiotensin II. The catalysed reaction is bradykinin + H2O = L-Phe-L-Arg + bradykinin(1-7). It carries out the reaction substance P + H2O = substance P(1-9) + L-Leu-L-Met-NH2. It catalyses the reaction substance P + H2O = substance P(1-8) + Gly-L-Leu-L-Met-NH2. The enzyme catalyses substance P + H2O = L-Phe-L-Phe-Gly-L-Leu-L-Met-NH2 + substance P(1-6). The catalysed reaction is neurotensin + H2O = neurotensin(1-11) + L-isoleucyl-L-leucine. It carries out the reaction goralatide + H2O = N-acetyl-L-seryl-L-aspartate + L-lysyl-L-proline. It catalyses the reaction Met-enkephalin + H2O = L-phenylalanyl-L-methionine + L-tyrosylglycylglycine. The enzyme catalyses Leu-enkephalin + H2O = L-tyrosylglycylglycine + L-phenylalanyl-L-leucine. The catalysed reaction is Met-enkephalin-Arg-Phe + H2O = L-arginyl-L-phenylalanine + Met-enkephalin. Its activity is regulated as follows. The dipeptidyl carboxypeptidase activity is strongly activated by chloride. Specifically inhibited by lisinopril. Inhibited by mixanpril, an orally-active drug used for the treatment of hypertension. With respect to regulation, strongly inhibited by lisinopril and captopril. In terms of biological role, dipeptidyl carboxypeptidase that removes dipeptides from the C-terminus of a variety of circulating hormones, such as angiotensin I, bradykinin or enkephalins, thereby playing a key role in the regulation of blood pressure, electrolyte homeostasis or synaptic plasticity. Composed of two similar catalytic domains, each possessing a functional active site, with different selectivity for substrates. Plays a major role in the angiotensin-renin system that regulates blood pressure and sodium retention by the kidney by converting angiotensin I to angiotensin II, resulting in an increase of the vasoconstrictor activity of angiotensin. Also able to inactivate bradykinin, a potent vasodilator, and therefore enhance the blood pressure response. Acts as a regulator of synaptic transmission by mediating cleavage of neuropeptide hormones, such as substance P, neurotensin or enkephalins. Catalyzes degradation of different enkephalin neuropeptides (Met-enkephalin, Leu-enkephalin, Met-enkephalin-Arg-Phe and possibly Met-enkephalin-Arg-Gly-Leu). Acts as a regulator of synaptic plasticity in the nucleus accumbens of the brain by mediating cleavage of Met-enkephalin-Arg-Phe, a strong ligand of Mu-type opioid receptor OPRM1, into Met-enkephalin. Met-enkephalin-Arg-Phe cleavage by ACE decreases activation of OPRM1, leading to long-term synaptic potentiation of glutamate release. Also acts as a regulator of hematopoietic stem cell differentiation by mediating degradation of hemoregulatory peptide N-acetyl-SDKP (AcSDKP). Acts as a regulator of cannabinoid signaling pathway by mediating degradation of hemopressin, an antagonist peptide of the cannabinoid receptor CNR1. Involved in amyloid-beta metabolism by catalyzing degradation of Amyloid-beta protein 40 and Amyloid-beta protein 42 peptides, thereby preventing plaque formation. Catalyzes cleavage of cholecystokinin (maturation of Cholecystokinin-8 and Cholecystokinin-5) and Gonadoliberin-1 (both maturation and degradation) hormones. Degradation of hemoregulatory peptide N-acetyl-SDKP (AcSDKP) and amyloid-beta proteins is mediated by the N-terminal catalytic domain, while angiotensin I and cholecystokinin cleavage is mediated by the C-terminal catalytic region. Its function is as follows. Soluble form that is released in blood plasma and other body fluids following proteolytic cleavage in the juxtamembrane stalk region. Functionally, isoform produced by alternative promoter usage that is specifically expressed in spermatocytes and adult testis, and which is required for male fertility. In contrast to somatic isoforms, only contains one catalytic domain. Acts as a dipeptidyl carboxypeptidase that removes dipeptides from the C-terminus of substrates. The identity of substrates that are needed for male fertility is unknown. May also have a glycosidase activity which releases GPI-anchored proteins from the membrane by cleaving the mannose linkage in the GPI moiety. The GPIase activity was reported to be essential for the egg-binding ability of the sperm. This activity is however unclear and has been challenged by other groups, suggesting that it may be indirect. This Oryctolagus cuniculus (Rabbit) protein is Angiotensin-converting enzyme.